A 337-amino-acid chain; its full sequence is MSVTLAIDAMGGDHGVVVTVPAACDFLEKHSDVKIILVGDPDLIKQVLDKSPKAPIERIQIIAASEVVLMDDPIEIALRRKKDSSMRVAIVQVKEGAADAVVSSGNTGALMAISRYILKTLDGVDRPAIATAIPNELGLGTTMLDLGANADCEPMHLVQFAQMANVMVQVVDGKPNPSIGLLNIGEEVIKGNEVVKQTSELLRQTNLNFYGNVEGNDIFKGTTDIVVCDGFVGNVVLKASEGLAKMMSGLIRKEFNRSLFTKLMAVCAMVPLLRVRKRVDHRRYNGAVLLGLRGCVIKSHGSADRFAFGFALERAYEASKNHMVERIAAAFVVETTE.

Belongs to the PlsX family. Homodimer. Probably interacts with PlsY.

It localises to the cytoplasm. It catalyses the reaction a fatty acyl-[ACP] + phosphate = an acyl phosphate + holo-[ACP]. Its pathway is lipid metabolism; phospholipid metabolism. In terms of biological role, catalyzes the reversible formation of acyl-phosphate (acyl-PO(4)) from acyl-[acyl-carrier-protein] (acyl-ACP). This enzyme utilizes acyl-ACP as fatty acyl donor, but not acyl-CoA. This Polynucleobacter asymbioticus (strain DSM 18221 / CIP 109841 / QLW-P1DMWA-1) (Polynucleobacter necessarius subsp. asymbioticus) protein is Phosphate acyltransferase.